We begin with the raw amino-acid sequence, 694 residues long: Frizzled-8 (694 aa).

The N-terminal stretch at 1 to 27 (MEWGYLLEVTSLLAALALLQRSSGAAA) is a signal peptide. Residues 28-275 (ASAKELACQE…NPFFSQDERA (248 aa)) are Extracellular-facing. The FZ domain occupies 30 to 151 (AKELACQEIT…GNPDTLCMDY (122 aa)). 5 disulfide bridges follow: C35–C96, C43–C89, C80–C118, C107–C148, and C111–C135. Residue N49 is glycosylated (N-linked (GlcNAc...) asparagine). 71 to 78 (QFWPLVEI) is a hexadecanoate binding site. The interval 95–100 (ICLEDY) is wnt-binding. Residues 147–152 (LCMDYN) are wnt-binding. N152 is a glycosylation site (N-linked (GlcNAc...) asparagine). A disordered region spans residues 155-226 (DLTTAAPSPP…KARPPGGGAA (72 aa)). Over residues 161–175 (PSPPRRLPPPPPGEQ) the composition is skewed to pro residues. The segment covering 176–186 (PPSGSGHGRPP) has biased composition (low complexity). A compositionally biased stretch (gly residues) spans 210–225 (RGGGGGGKARPPGGGA). The chain crosses the membrane as a helical span at residues 276 to 296 (FTVFWIGLWSVLCFVSTFATV). Residues 297–312 (STFLIDMERFKYPERP) are Cytoplasmic-facing. A helical membrane pass occupies residues 313–333 (IIFLSACYLFVSVGYLVRLVA). The Extracellular segment spans residues 334–396 (GHEKVACSGG…RYETTGPALC (63 aa)). Residues 397–417 (TVVFLLVYFFGMASSIWWVIL) form a helical membrane-spanning segment. Residues 418 to 439 (SLTWFLAAGMKWGNEAIAGYSQ) lie on the Cytoplasmic side of the membrane. Residues 440-460 (YFHLAAWLVPSVKSIAVLALS) form a helical membrane-spanning segment. Residues 461-483 (SVDGDPVAGICYVGNQSLDNLRG) are Extracellular-facing. N475 is a glycosylation site (N-linked (GlcNAc...) asparagine). A helical membrane pass occupies residues 484–504 (FVLAPLVIYLFIGTMFLLAGF). The Cytoplasmic segment spans residues 505 to 532 (VSLFRIRSVIKQQDGPTKTHKLEKLMIR). A helical membrane pass occupies residues 533–553 (LGLFTVLYTVPAAVVVACLFY). Topologically, residues 554-584 (EQHNRPRWEATHNCPCLRDLQPDQARRPDYA) are extracellular. The helical transmembrane segment at 585–605 (VFMLKYFMCLVVGITSGVWVW) threads the bilayer. The Cytoplasmic portion of the chain corresponds to 606 to 694 (SGKTLESWRS…YPKQMPLSQV (89 aa)). The Lys-Thr-X-X-X-Trp motif, mediates interaction with the PDZ domain of Dvl family members signature appears at 608-613 (KTLESW). A compositionally biased stretch (gly residues) spans 648–664 (GGGGPGGGGGPGGGGGS). Residues 648-668 (GGGGPGGGGGPGGGGGSLYSD) are disordered. The short motif at 692-694 (SQV) is the PDZ-binding element.

Belongs to the G-protein coupled receptor Fz/Smo family. Component of a Wnt-signaling complex that contains a WNT protein, a FZD protein and LRP5 or LRP6. Interacts directly with LRP5 or LRP6; the interaction is promoted by Wnt-binding and signaling and inhibited by DKK1. Interacts with GPOC, RSPO1 and RSPO3. Interacts with glypican GPC3. Post-translationally, ubiquitinated by ZNRF3, leading to its degradation by the proteasome. As to expression, most abundant in fetal kidney, followed by brain and lung. In adult tissues, expressed in kidney, heart, pancreas and skeletal muscle.

The protein localises to the membrane. Its subcellular location is the golgi apparatus. It localises to the cell membrane. Receptor for Wnt proteins. Component of the Wnt-Fzd-LRP5-LRP6 complex that triggers beta-catenin signaling through inducing aggregation of receptor-ligand complexes into ribosome-sized signalosomes. The beta-catenin canonical signaling pathway leads to the activation of disheveled proteins, inhibition of GSK-3 kinase, nuclear accumulation of beta-catenin and activation of Wnt target genes. A second signaling pathway involving PKC and calcium fluxes has been seen for some family members, but it is not yet clear if it represents a distinct pathway or if it can be integrated in the canonical pathway, as PKC seems to be required for Wnt-mediated inactivation of GSK-3 kinase. Both pathways seem to involve interactions with G-proteins. May be involved in transduction and intercellular transmission of polarity information during tissue morphogenesis and/or in differentiated tissues. Coreceptor along with RYK of Wnt proteins, such as WNT1. The protein is Frizzled-8 (FZD8) of Homo sapiens (Human).